Reading from the N-terminus, the 762-residue chain is Endothelin-converting enzyme 1 (762 aa).

The Cytoplasmic segment spans residues methionine 1 to arginine 60. Residues leucine 61 to isoleucine 81 form a helical; Signal-anchor for type II membrane protein membrane-spanning segment. At glutamine 82–tryptophan 762 the chain is on the extracellular side. The Peptidase M13 domain maps to valine 90–tryptophan 762. Disulfide bonds link cysteine 91–cysteine 96, cysteine 114–cysteine 747, cysteine 122–cysteine 707, cysteine 177–cysteine 427, and cysteine 636–cysteine 759. 8 N-linked (GlcNAc...) asparagine glycosylation sites follow: asparagine 158, asparagine 179, asparagine 202, asparagine 262, asparagine 308, asparagine 354, asparagine 375, and asparagine 531. Position 599 (histidine 599) interacts with Zn(2+). Glutamate 600 is an active-site residue. Position 603 (histidine 603) interacts with Zn(2+). N-linked (GlcNAc...) asparagine glycans are attached at residues asparagine 624 and asparagine 643. A Zn(2+)-binding site is contributed by glutamate 659. Residue aspartate 663 is the Proton donor of the active site.

The protein belongs to the peptidase M13 family. In terms of assembly, homodimer; disulfide-linked. Interacts with PPP1R16B. Interacts with TSPAN8; this interaction recruits the endothelin converting enzyme ECE1 to tetraspanin-enriched microdomains and positively modulates its enzymatic activity. Zn(2+) is required as a cofactor. As to expression, all isoforms are expressed in aortic endothelial cells. Isoform A is also expressed in liver; isoform B in smooth muscle cells and fibroblasts; isoform C in aortic endothelial cells, smooth muscle cells, fibroblasts, liver and lung, and isoform D in smooth muscle cells.

It localises to the cell membrane. It catalyses the reaction Hydrolysis of the 21-Trp-|-Val-22 bond in big endothelin to form endothelin 1.. Inhibited by phosphoramidon. Converts big endothelin-1 to endothelin-1. The chain is Endothelin-converting enzyme 1 (Ece1) from Rattus norvegicus (Rat).